The primary structure comprises 201 residues: Large ribosomal subunit protein uL4 (201 aa).

The tract at residues 44–71 (RAQKTRAEVTGSGKKPWRQKGTGRARSG) is disordered.

This sequence belongs to the universal ribosomal protein uL4 family. As to quaternary structure, part of the 50S ribosomal subunit.

In terms of biological role, one of the primary rRNA binding proteins, this protein initially binds near the 5'-end of the 23S rRNA. It is important during the early stages of 50S assembly. It makes multiple contacts with different domains of the 23S rRNA in the assembled 50S subunit and ribosome. Its function is as follows. Forms part of the polypeptide exit tunnel. The protein is Large ribosomal subunit protein uL4 of Escherichia fergusonii (strain ATCC 35469 / DSM 13698 / CCUG 18766 / IAM 14443 / JCM 21226 / LMG 7866 / NBRC 102419 / NCTC 12128 / CDC 0568-73).